Consider the following 182-residue polypeptide: MKVAVASRNPNKVRAVEEAYRLFGIPARVSSVDKPPSLPPQPVGLEAVVAGAVERAKAALAAAGEAEHGVGIEAGALEAGGRHLDVTVAAVADRGGLVTLGFGPAFQIPDVFLGDVLRGVELGVLAERHFGKAAVGYREGIIGLLTRGRVTRLDLNVVAVAMALVPRLPANAQLYRFWKTAP.

Glu65 lines the Mg(2+) pocket. Position 65 to 66 (65 to 66) interacts with substrate; it reads EA.

This sequence belongs to the YjjX NTPase family. In terms of assembly, homodimer. The cofactor is Mg(2+). Requires Mn(2+) as cofactor.

The enzyme catalyses XTP + H2O = XDP + phosphate + H(+). The catalysed reaction is ITP + H2O = IDP + phosphate + H(+). Its function is as follows. Phosphatase that hydrolyzes non-canonical purine nucleotides such as XTP and ITP to their respective diphosphate derivatives. Probably excludes non-canonical purines from DNA/RNA precursor pool, thus preventing their incorporation into DNA/RNA and avoiding chromosomal lesions. The protein is Probable inosine/xanthosine triphosphatase of Pyrobaculum neutrophilum (strain DSM 2338 / JCM 9278 / NBRC 100436 / V24Sta) (Thermoproteus neutrophilus).